We begin with the raw amino-acid sequence, 308 residues long: MTSKLEQLKQFTTVVADTGDLDAIARLKPVDATTNPSLLLKAASLPGYADLLKQAVSTGKGDPGLACDHFAVAVGQEILKVIPGRISTEVDARLSFDTGATLLRAERLIGLYEQAGIGRERVLIKIASTWEGIRAAEQLEKSGVQTNLTLLFSFAQAQACADAGVFLISPFVGRIYDWYKKTEGRDFVGSEDPGVQSVSRIYDYYKANGYDTVVMGASFRNLGQIEALAGCDRLTISPELLQKLAEDEGELSRKLAPGGAGEARQTLDESAFRWALNEDAMATEKLAEGIRLFARDQEKLEALLAAKA.

K125 (schiff-base intermediate with substrate) is an active-site residue.

This sequence belongs to the transaldolase family. Type 1 subfamily. In terms of assembly, homodimer.

The protein resides in the cytoplasm. The enzyme catalyses D-sedoheptulose 7-phosphate + D-glyceraldehyde 3-phosphate = D-erythrose 4-phosphate + beta-D-fructose 6-phosphate. It participates in carbohydrate degradation; pentose phosphate pathway; D-glyceraldehyde 3-phosphate and beta-D-fructose 6-phosphate from D-ribose 5-phosphate and D-xylulose 5-phosphate (non-oxidative stage): step 2/3. Its function is as follows. Transaldolase is important for the balance of metabolites in the pentose-phosphate pathway. The protein is Transaldolase of Ectopseudomonas mendocina (strain ymp) (Pseudomonas mendocina).